The sequence spans 343 residues: MLASTFATHPAAAAAARRRGPIRWRLPFCSQIVTVTLRRRFPMARLSITNALASQSLESAPAAPPKHSFPILVNSCTGKMGKAVAEAAVSAGLQLVPVSFSAIEVPDGKVEICDREIYIRDPSEGESILPSIAKDYPDMIVVDYTVPDAVNANAELYCKLGLPFVMGTTGGNRQLLHKTVEDANVYAVISPQMGKQVVAFLAAMEIMAEQFPGAFSGYKLEVMESHQATKLDISGTAKAVISCFQKLGVSFNLNEVKQVRDPQEQLTLVGVPEEHLSGHAFHMYHLTSPDETVSFEFQHNVCGRSIYAEGTVDAALFLHKKIQSGANKKLYDMIDVLREGNMR.

A chloroplast-targeting transit peptide spans 1 to 14; it reads MLASTFATHPAAAA. Residues 167-169 and 190-193 each bind NAD(+); these read GTT and SPQM. The active-site Proton donor/acceptor is His226. Lys230 serves as the catalytic Proton donor. Position 235 to 236 (235 to 236) interacts with (S)-2,3,4,5-tetrahydrodipicolinate; the sequence is GT.

It belongs to the DapB family.

The protein localises to the plastid. Its subcellular location is the chloroplast. It catalyses the reaction (S)-2,3,4,5-tetrahydrodipicolinate + NAD(+) + H2O = (2S,4S)-4-hydroxy-2,3,4,5-tetrahydrodipicolinate + NADH + H(+). It carries out the reaction (S)-2,3,4,5-tetrahydrodipicolinate + NADP(+) + H2O = (2S,4S)-4-hydroxy-2,3,4,5-tetrahydrodipicolinate + NADPH + H(+). It functions in the pathway amino-acid biosynthesis; L-lysine biosynthesis via DAP pathway; (S)-tetrahydrodipicolinate from L-aspartate: step 4/4. Functionally, catalyzes the conversion of 4-hydroxy-tetrahydrodipicolinate (HTPA) to tetrahydrodipicolinate. In Oryza sativa subsp. japonica (Rice), this protein is Probable 4-hydroxy-tetrahydrodipicolinate reductase 1, chloroplastic (DAPB1).